Consider the following 119-residue polypeptide: Immunoglobulin heavy variable 3-73 (119 aa).

Residues 1-19 (MEFGLSWVFLVAILKGVQC) form the signal peptide. Positions 20-44 (EVQLVESGGGLVQPGGSLKLSCAAS) are framework-1. Residues 20 to 119 (EVQLVESGGG…EDTAVYYCTR (100 aa)) form the Ig-like domain. Cysteines 41 and 117 form a disulfide. The interval 45–52 (GFTFSGSA) is complementarity-determining-1. The segment at 53-69 (MHWVRQASGKGLEWVGR) is framework-2. The interval 70–79 (IRSKANSYAT) is complementarity-determining-2. Positions 80–117 (AYAASVKGRFTISRDDSKNTAYLQMNSLKTEDTAVYYC) are framework-3. The interval 118-119 (TR) is complementarity-determining-3.

In terms of assembly, immunoglobulins are composed of two identical heavy chains and two identical light chains; disulfide-linked.

The protein resides in the secreted. It is found in the cell membrane. In terms of biological role, v region of the variable domain of immunoglobulin heavy chains that participates in the antigen recognition. Immunoglobulins, also known as antibodies, are membrane-bound or secreted glycoproteins produced by B lymphocytes. In the recognition phase of humoral immunity, the membrane-bound immunoglobulins serve as receptors which, upon binding of a specific antigen, trigger the clonal expansion and differentiation of B lymphocytes into immunoglobulins-secreting plasma cells. Secreted immunoglobulins mediate the effector phase of humoral immunity, which results in the elimination of bound antigens. The antigen binding site is formed by the variable domain of one heavy chain, together with that of its associated light chain. Thus, each immunoglobulin has two antigen binding sites with remarkable affinity for a particular antigen. The variable domains are assembled by a process called V-(D)-J rearrangement and can then be subjected to somatic hypermutations which, after exposure to antigen and selection, allow affinity maturation for a particular antigen. The protein is Immunoglobulin heavy variable 3-73 of Homo sapiens (Human).